The sequence spans 141 residues: Large ribosomal subunit protein uL11 (141 aa).

This sequence belongs to the universal ribosomal protein uL11 family. As to quaternary structure, part of the ribosomal stalk of the 50S ribosomal subunit. Interacts with L10 and the large rRNA to form the base of the stalk. L10 forms an elongated spine to which L12 dimers bind in a sequential fashion forming a multimeric L10(L12)X complex. One or more lysine residues are methylated.

Forms part of the ribosomal stalk which helps the ribosome interact with GTP-bound translation factors. This Streptococcus suis (strain 05ZYH33) protein is Large ribosomal subunit protein uL11.